A 376-amino-acid polypeptide reads, in one-letter code: Outer membrane porin C (376 aa).

An N-terminal signal peptide occupies residues 1 to 21 (MKLRVLSLMVPALLVAGTAGA).

It belongs to the Gram-negative porin family. As to quaternary structure, homotrimer.

The protein resides in the cell outer membrane. Its function is as follows. Forms pores that allow passive diffusion of small molecules across the outer membrane. In Serratia marcescens, this protein is Outer membrane porin C (ompC).